The chain runs to 147 residues: MSLKIRLARGGSKKRPFYSIVVADARAPRDGRFIEKIGTYDPRLAKDSGDRVKVNAEKAAEWIKKGAQPTDRVARFLSKVEVDGKAVVAWTHGNNPKKAEPGKKAQERAKERADKAEAKAAAAAEAAAAPAEEAPAEAAPAEETSES.

The disordered stretch occupies residues 89 to 147; that stretch reads AWTHGNNPKKAEPGKKAQERAKERADKAEAKAAAAAEAAAAPAEEAPAEAAPAEETSES. Residues 97-118 are compositionally biased toward basic and acidic residues; that stretch reads KKAEPGKKAQERAKERADKAEA. Positions 119 to 147 are enriched in low complexity; that stretch reads KAAAAAEAAAAPAEEAPAEAAPAEETSES.

It belongs to the bacterial ribosomal protein bS16 family.

The protein is Small ribosomal subunit protein bS16 of Hyphomonas neptunium (strain ATCC 15444).